A 205-amino-acid polypeptide reads, in one-letter code: Transcriptional regulator GfcR (205 aa).

Belongs to the purine/pyrimidine phosphoribosyltransferase family. GfcR subfamily.

The polypeptide is Transcriptional regulator GfcR (Methanococcus maripaludis (strain C7 / ATCC BAA-1331)).